The chain runs to 246 residues: Large ribosomal subunit protein uL3 (246 aa).

Residue glutamine 151 is modified to N5-methylglutamine.

This sequence belongs to the universal ribosomal protein uL3 family. As to quaternary structure, part of the 50S ribosomal subunit. Forms a cluster with proteins L14 and L19. Post-translationally, methylated by PrmB.

Functionally, one of the primary rRNA binding proteins, it binds directly near the 3'-end of the 23S rRNA, where it nucleates assembly of the 50S subunit. This is Large ribosomal subunit protein uL3 from Bartonella bacilliformis (strain ATCC 35685 / KC583 / Herrer 020/F12,63).